Here is a 132-residue protein sequence, read N- to C-terminus: Small ribosomal subunit protein uS12 (132 aa).

Residue Asp-89 is modified to 3-methylthioaspartic acid. A disordered region spans residues 103-132; sequence DTSGVADRRQSRSKYGAKQPKEGGAAKGKK.

It belongs to the universal ribosomal protein uS12 family. Part of the 30S ribosomal subunit. Contacts proteins S8 and S17. May interact with IF1 in the 30S initiation complex.

In terms of biological role, with S4 and S5 plays an important role in translational accuracy. Interacts with and stabilizes bases of the 16S rRNA that are involved in tRNA selection in the A site and with the mRNA backbone. Located at the interface of the 30S and 50S subunits, it traverses the body of the 30S subunit contacting proteins on the other side and probably holding the rRNA structure together. The combined cluster of proteins S8, S12 and S17 appears to hold together the shoulder and platform of the 30S subunit. This Chlorobium phaeovibrioides (strain DSM 265 / 1930) (Prosthecochloris vibrioformis (strain DSM 265)) protein is Small ribosomal subunit protein uS12.